A 365-amino-acid polypeptide reads, in one-letter code: Peptide chain release factor 2 (365 aa).

Gln252 carries the N5-methylglutamine modification.

This sequence belongs to the prokaryotic/mitochondrial release factor family. Post-translationally, methylated by PrmC. Methylation increases the termination efficiency of RF2.

The protein localises to the cytoplasm. In terms of biological role, peptide chain release factor 2 directs the termination of translation in response to the peptide chain termination codons UGA and UAA. In Haemophilus ducreyi (strain 35000HP / ATCC 700724), this protein is Peptide chain release factor 2.